The sequence spans 226 residues: Ornithine decarboxylase antizyme (226 aa).

The protein belongs to the ODC antizyme family. In terms of assembly, interacts with ODC and thereby sterically blocks ODC homodimerization.

Ornithine decarboxylase (ODC) antizyme protein that negatively regulates ODC activity and intracellular polyamine biosynthesis in response to increased intracellular polyamine levels. Binds to ODC monomers, inhibiting the assembly of the functional ODC homodimer, and targets the monomers for ubiquitin-independent proteolytic destruction by the 26S proteasome. The protein is Ornithine decarboxylase antizyme (spa1) of Schizosaccharomyces japonicus (Fission yeast).